Consider the following 358-residue polypeptide: Isopentenyl-diphosphate delta-isomerase (358 aa).

12–13 (RK) is a binding site for substrate. Residues 69 to 71 (AMT), serine 99, and asparagine 128 each bind FMN. Glutamine 158 provides a ligand contact to substrate. Glutamate 159 is a binding site for Mg(2+). FMN is bound by residues lysine 190, threonine 220, 267-269 (GIR), and 288-289 (AG).

The protein belongs to the IPP isomerase type 2 family. As to quaternary structure, homooctamer. Dimer of tetramers. FMN serves as cofactor. Requires NADPH as cofactor. The cofactor is Mg(2+).

It localises to the cytoplasm. The catalysed reaction is isopentenyl diphosphate = dimethylallyl diphosphate. Functionally, involved in the biosynthesis of isoprenoids. Catalyzes the 1,3-allylic rearrangement of the homoallylic substrate isopentenyl (IPP) to its allylic isomer, dimethylallyl diphosphate (DMAPP). The protein is Isopentenyl-diphosphate delta-isomerase of Listeria welshimeri serovar 6b (strain ATCC 35897 / DSM 20650 / CCUG 15529 / CIP 8149 / NCTC 11857 / SLCC 5334 / V8).